The sequence spans 114 residues: Large ribosomal subunit protein P1 (114 aa).

Residues 55–114 (EEAAAAPAAAPAASGSDDEAAADDGDDDEEADADEAAEAEDAGDDDDEEPSGEGLGDLFG) are disordered. A compositionally biased stretch (low complexity) spans 56 to 69 (EAAAAPAAAPAASG). Residues 70-105 (SDDEAAADDGDDDEEADADEAAEAEDAGDDDDEEPS) are compositionally biased toward acidic residues.

The protein belongs to the eukaryotic ribosomal protein P1/P2 family. Part of the 50S ribosomal subunit. Homodimer, it forms part of the ribosomal stalk which helps the ribosome interact with GTP-bound translation factors. Forms a heptameric uL10/P0(P1)2(P1)2(P1)2 complex, where uL10/P0 forms an elongated spine to which the P1 dimers bind in a sequential fashion.

Its function is as follows. Forms part of the ribosomal stalk, playing a central role in the interaction of the ribosome with GTP-bound translation factors. This chain is Large ribosomal subunit protein P1, found in Halobacterium salinarum (strain ATCC 700922 / JCM 11081 / NRC-1) (Halobacterium halobium).